The sequence spans 435 residues: MGNLKIYPGKLSGEVKIPPSKSMAHRAVICAALGDGVSKVTNIDYSDDIIATIEAMSSLGAKITKKEDYLEVYGINSPENIKANSVKEQRTIDCNESGSTLRFLVPIAALFDGVNRFVGRGNLGKRPLDTYYKIFDEQGIKYSYKDGILDLKTEGKLKAGEFKMEGNISSQFITGLLFTLPLLDGDSKIVITTEMESKGYIDLTLRAIKDFGVEIINNNYEEFIIKGNQIYKSIDYRVEGDYSQAAFFFCADALSSNIVLNDLKLDSLQGDKEVIDILQRMGLKLNNKDNGLIGSASLGLKSTIIDGSQCPDIIPVVSLVAALSEGTTEIINAGRLRIKECDRLAAVTSELNKLGAKIIEKEEGLIIEGVKELKGNVEVWSHKDHRIAMTMAIASTMCKERIILKDYECVSKSYPQFWDDFKNLGGVFDEWNVGE.

Residues K21, S22, and R26 each contribute to the 3-phosphoshikimate site. A phosphoenolpyruvate-binding site is contributed by K21. 2 residues coordinate phosphoenolpyruvate: G98 and R126. Positions 169, 170, 171, 197, 312, and 339 each coordinate 3-phosphoshikimate. Residue Q171 participates in phosphoenolpyruvate binding. The Proton acceptor role is filled by D312. Phosphoenolpyruvate is bound by residues R343, R386, and K412.

This sequence belongs to the EPSP synthase family. Monomer.

The protein resides in the cytoplasm. The catalysed reaction is 3-phosphoshikimate + phosphoenolpyruvate = 5-O-(1-carboxyvinyl)-3-phosphoshikimate + phosphate. It participates in metabolic intermediate biosynthesis; chorismate biosynthesis; chorismate from D-erythrose 4-phosphate and phosphoenolpyruvate: step 6/7. In terms of biological role, catalyzes the transfer of the enolpyruvyl moiety of phosphoenolpyruvate (PEP) to the 5-hydroxyl of shikimate-3-phosphate (S3P) to produce enolpyruvyl shikimate-3-phosphate and inorganic phosphate. In Clostridium beijerinckii (strain ATCC 51743 / NCIMB 8052) (Clostridium acetobutylicum), this protein is 3-phosphoshikimate 1-carboxyvinyltransferase.